We begin with the raw amino-acid sequence, 911 residues long: Protein translocase subunit SecA (911 aa).

ATP contacts are provided by residues Gln-86, Gly-104–Thr-108, and Asp-512. Zn(2+)-binding residues include Cys-895, Cys-897, Cys-906, and His-907.

This sequence belongs to the SecA family. As to quaternary structure, monomer and homodimer. Part of the essential Sec protein translocation apparatus which comprises SecA, SecYEG and auxiliary proteins SecDF-YajC and YidC. Zn(2+) is required as a cofactor.

The protein resides in the cell inner membrane. Its subcellular location is the cytoplasm. The enzyme catalyses ATP + H2O + cellular proteinSide 1 = ADP + phosphate + cellular proteinSide 2.. Functionally, part of the Sec protein translocase complex. Interacts with the SecYEG preprotein conducting channel. Has a central role in coupling the hydrolysis of ATP to the transfer of proteins into and across the cell membrane, serving both as a receptor for the preprotein-SecB complex and as an ATP-driven molecular motor driving the stepwise translocation of polypeptide chains across the membrane. The chain is Protein translocase subunit SecA from Bordetella bronchiseptica (strain ATCC BAA-588 / NCTC 13252 / RB50) (Alcaligenes bronchisepticus).